The chain runs to 459 residues: Protein U54 (459 aa).

The signal sequence occupies residues 1-20 (MQPATLQWSSYVLQLRLTTA). N-linked (GlcNAc...) asparagine; by host glycosylation is found at N76, N100, N281, N321, and N452.

The protein belongs to the herpesviridae UL82 family.

This Homo sapiens (Human) protein is Protein U54 (U54).